The primary structure comprises 327 residues: E3 ubiquitin-protein ligase ZNRF4 (327 aa).

Positions Met-1–Ala-28 are cleaved as a signal peptide. At Gln-29 to Pro-150 the chain is on the lumenal side. Asn-31 carries N-linked (GlcNAc...) asparagine glycosylation. Residues Val-151–Val-171 form a helical membrane-spanning segment. Residues Leu-172–Ser-327 are Cytoplasmic-facing. An RING-type; atypical zinc finger spans residues Cys-209–Lys-252. The span at Ala-256–Gly-265 shows a compositional bias: polar residues. The tract at residues Ala-256 to Pro-279 is disordered.

Interacts with CANX. As to expression, expressed exclusively in spermatids (at protein level).

It is found in the endoplasmic reticulum membrane. The catalysed reaction is S-ubiquitinyl-[E2 ubiquitin-conjugating enzyme]-L-cysteine + [acceptor protein]-L-lysine = [E2 ubiquitin-conjugating enzyme]-L-cysteine + N(6)-ubiquitinyl-[acceptor protein]-L-lysine.. Its pathway is protein modification; protein ubiquitination. E3 ubiquitin-protein ligase that acts as a negative regulator of NOD2 signaling by mediating ubiquitination and degradation of RIPK2. Also catalyzes ubiquitination and proteasomal degradation of CANX within the endoplasmic reticulum. Could have a role in spermatogenesis. The polypeptide is E3 ubiquitin-protein ligase ZNRF4 (Mus musculus (Mouse)).